A 196-amino-acid polypeptide reads, in one-letter code: uncharacterized protein (196 aa).

A helical transmembrane segment spans residues 20-40 (GALALGCIALLLMGIVGCTTV).

The protein localises to the membrane. This is an uncharacterized protein from Mycobacterium tuberculosis (strain CDC 1551 / Oshkosh).